We begin with the raw amino-acid sequence, 492 residues long: Glutamyl-tRNA(Gln) amidotransferase subunit A (492 aa).

Active-site charge relay system residues include Lys84 and Ser159. Ser183 serves as the catalytic Acyl-ester intermediate.

This sequence belongs to the amidase family. GatA subfamily. In terms of assembly, heterotrimer of A, B and C subunits.

The catalysed reaction is L-glutamyl-tRNA(Gln) + L-glutamine + ATP + H2O = L-glutaminyl-tRNA(Gln) + L-glutamate + ADP + phosphate + H(+). In terms of biological role, allows the formation of correctly charged Gln-tRNA(Gln) through the transamidation of misacylated Glu-tRNA(Gln) in organisms which lack glutaminyl-tRNA synthetase. The reaction takes place in the presence of glutamine and ATP through an activated gamma-phospho-Glu-tRNA(Gln). The protein is Glutamyl-tRNA(Gln) amidotransferase subunit A of Anaeromyxobacter dehalogenans (strain 2CP-C).